The following is a 96-amino-acid chain: Protein Vpr (96 aa).

The interval methionine 1 to leucine 42 is homooligomerization. Phosphoserine; by host occurs at positions 79, 94, and 96.

This sequence belongs to the HIV-1 VPR protein family. Homooligomer, may form homodimer. Interacts with p6-gag region of the Pr55 Gag precursor protein through a (Leu-X-X)4 motif near the C-terminus of the P6gag protein. Interacts with host UNG. May interact with host RAD23A/HHR23A. Interacts with host VPRBP/DCAF1, leading to hijack the CUL4A-RBX1-DDB1-DCAF1/VPRBP complex, mediating ubiquitination of host proteins such as TERT and ZGPAT and arrest of the cell cycle in G2 phase. Phosphorylated on several residues by host. These phosphorylations regulate VPR activity for the nuclear import of the HIV-1 pre-integration complex.

The protein resides in the virion. Its subcellular location is the host nucleus. It localises to the host extracellular space. Functionally, during virus replication, may deplete host UNG protein, and incude G2-M cell cycle arrest. Acts by targeting specific host proteins for degradation by the 26S proteasome, through association with the cellular CUL4A-DDB1 E3 ligase complex by direct interaction with host VPRPB/DCAF-1. Cell cycle arrest reportedly occurs within hours of infection and is not blocked by antiviral agents, suggesting that it is initiated by the VPR carried into the virion. Additionally, VPR induces apoptosis in a cell cycle dependent manner suggesting that these two effects are mechanistically linked. Detected in the serum and cerebrospinal fluid of AIDS patient, VPR may also induce cell death to bystander cells. During virus entry, plays a role in the transport of the viral pre-integration (PIC) complex to the host nucleus. This function is crucial for viral infection of non-dividing macrophages. May act directly at the nuclear pore complex, by binding nucleoporins phenylalanine-glycine (FG)-repeat regions. This Homo sapiens (Human) protein is Protein Vpr.